The chain runs to 2403 residues: Highly reducing polyketide synthase fogA (2403 aa).

The Ketosynthase family 3 (KS3) domain occupies 3–428; that stretch reads DDPPCIVGMA…GANAHVILES (426 aa). Active-site for beta-ketoacyl synthase activity residues include Cys-176, His-311, and His-350. Positions 538 to 858 are malonyl-CoA:ACP transacylase (MAT) domain; sequence VFTGQGAQYA…PYAPSLVRKE (321 aa). Ser-632 (for malonyltransferase activity) is an active-site residue. The segment at 929 to 1068 is N-terminal hotdog fold; that stretch reads HELLGTFALT…GSIRVVEPLT (140 aa). A dehydratase (DH) domain region spans residues 929 to 1238; sequence HELLGTFALT…DARMSLYTGK (310 aa). Residues 929–1241 enclose the PKS/mFAS DH domain; that stretch reads HELLGTFALT…MSLYTGKSSA (313 aa). Catalysis depends on His-961, which acts as the Proton acceptor; for dehydratase activity. The C-terminal hotdog fold stretch occupies residues 1084–1241; it reads SFEASPTNRW…MSLYTGKSSA (158 aa). Asp-1152 serves as the catalytic Proton donor; for dehydratase activity. The segment at 1663 to 1981 is enoyl reductase (ER) domain; sequence GATDSMFFQQ…QQDRIGKIVI (319 aa). Positions 2006–2185 are ketoreductase (KR) domain; sequence VYLLIGCLGG…AVAVGLGMIS (180 aa). Residues 2280–2300 form a disordered region; sequence AQNSTSSSGSNSNTPTTAAPW. Residues 2282–2296 show a composition bias toward low complexity; it reads NSTSSSGSNSNTPTT. In terms of domain architecture, Carrier spans 2320–2398; it reads SLNAAILRLI…GLAVVVEGKL (79 aa). O-(pantetheine 4'-phosphoryl)serine is present on Ser-2357.

The cofactor is pantetheine 4'-phosphate.

It participates in secondary metabolite biosynthesis. In terms of biological role, highly reducing polyketide synthase; part of the gene cluster that mediates the biosynthesis of flavoglaucin and congeners (including aspergin, dihydroauroglaucin and auroglaucin), prenylated salicylaldehyde derivatives carrying a saturated or an unsaturated C-7 side chain. FogA releases the carboxylic acid (8E,10E,12E)-3,5,7-trihydroxytetradeca-8,10,12-trienoic acid as its product, as well as derivatives with one and two double bonds. FogA is indeed able to reduce the initial triketide, thus being at least partially responsible for the differently saturated heptyl side chains of flavoglaucin congeners. The oxidoreductases fogB, fogC and fogD modify the nascent polyketide in fogA-bound form and, together, fogA, fogB, fogC and fogD are necessary for the formation of the aromatic core and the cyclized PKS products are released as salicyl alcohols. In particular, fogB is responsible for oxidation of a hydroxyl group or reduction of remaining double bond(s) at the C-7 residue whereas fogD is probably involved in the reductive release of the modified PKS products. The cytochrome P450 monooxygenase fogE is then responsible for the hydroxylation at C-3 of the benzene ring. The fogE products are substrates of the prenyltransferase fogH and the prenylated benzyl alcohols are subsequently oxidized by the fogF to produce the final aryl aldehydes flavoglaucin and congeners. The short-chain dehydrogenase fogG does not seem to be involved in the biosynthesis of the prenylated salicylaldehyde derivatives. The protein is Highly reducing polyketide synthase fogA of Aspergillus ruber (strain CBS 135680).